Reading from the N-terminus, the 496-residue chain is Fibronectin type III and SPRY domain-containing protein 1 (496 aa).

Residues 4–99 (QREALRKIIT…ALESSEELLE (96 aa)) are a coiled coil. Residues 105–162 (LQASDSEDFSQAAKEIKDGITMAPAFRLSLKAKVSDNMSHLMVDFAQERQMLQALKFL) form the COS domain. A Fibronectin type-III domain is found at 164-268 (VPSAPTIDLA…EPVTLETPAF (105 aa)). The B30.2/SPRY domain occupies 290-477 (WDAMGGKVQD…VTTGLQVPSA (188 aa)). Positions 301–336 (KAREKEGKGRTASPVNSPARGTPSPKRMSSGRGGRD) are disordered. Omega-N-methylarginine occurs at positions 310 and 320.

Oligomerization is required for binding to microtubules.

It is found in the cytoplasm. Its subcellular location is the cytoskeleton. The protein localises to the microtubule organizing center. It localises to the centrosome. The protein resides in the nucleus. It is found in the cleavage furrow. Its function is as follows. May be involved in microtubule organization and stabilization. In Mus musculus (Mouse), this protein is Fibronectin type III and SPRY domain-containing protein 1 (Fsd1).